The sequence spans 607 residues: Potassium transporter KimA (607 aa).

Over 1 to 30 (MYHSIKRFLIGKPLKSQAAGEQKLTKLKAL) the chain is Cytoplasmic. The helical transmembrane segment at 31-49 (AMLSSDALSSVAYGTEQIL) threads the bilayer. Asp-36 and Tyr-43 together coordinate K(+). The Extracellular segment spans residues 50-62 (IILATISAAAFWY). Residues 63–84 (SIPIAVGVLILLLALILSYRQI) form a helical membrane-spanning segment. The Cytoplasmic portion of the chain corresponds to 85–105 (IYAYPQGGGAYIVSKENLGEK). A helical transmembrane segment spans residues 106–134 (PGLIAGGSLLVDYILTVAVSISAGTDAIT). Positions 117 and 125 each coordinate K(+). At 135–142 (SAFPALHD) the chain is on the extracellular side. Residues 143–162 (YHVPIAIFLVLVIMILNLRG) form a helical membrane-spanning segment. The Cytoplasmic segment spans residues 163 to 166 (LSES). A helical transmembrane segment spans residues 167–190 (ASILAYPVYLFVVALLVLIAVGLF). At 191 to 214 (KLMTGQIDQPAHHTSLGTPVAGIT) the chain is on the extracellular side. Residues 215–238 (LFLLLKAFSSGCSALTGVEAISNA) form a helical membrane-spanning segment. Residues 239-249 (IPAFKNPPARN) lie on the Cytoplasmic side of the membrane. A helical membrane pass occupies residues 250-271 (AARTLAMMGILLAILFSGITVL). Residues 272 to 298 (AYGYGTAPKPDETVVSQIASETFGRNV) lie on the Extracellular side of the membrane. The helical transmembrane segment at 299–323 (FYYVIQGVTSLILVLAANTGFSAFP) threads the bilayer. Over 324-347 (QLAFNLARDQYMPRMFTVRGDRLG) the chain is Cytoplasmic. The helical transmembrane segment at 348–366 (FSNGIIFLGFASIVLIILF) threads the bilayer. Residues 367–372 (GGQTEH) are Extracellular-facing. Residues 373 to 393 (LIPLYAVGVFIPFTLSQTGMC) traverse the membrane as a helical segment. Residues 394-405 (MKWIKQKPKGWI) are Cytoplasmic-facing. The chain crosses the membrane as a helical span at residues 406–428 (GKMLINSCGALISFMVLSILFVT). The Extracellular portion of the chain corresponds to 429–431 (KFN). Residues 432–447 (VVWPVLIFMPIVVLLF) traverse the membrane as a helical segment. Topologically, residues 448-607 (FAIKNHYTAV…VATLPYHFKK (160 aa)) are cytoplasmic.

The protein belongs to the amino acid-polyamine-organocation (APC) superfamily. In terms of assembly, homodimer.

The protein localises to the cell membrane. It catalyses the reaction K(+)(in) + H(+)(in) = K(+)(out) + H(+)(out). Its activity is regulated as follows. Potassium uptake increases at lower external pH and is abolished by the proton ionophore carbonyl cyanide m-chlorophenylhydrazone (CCCP). Binds cyclic di-AMP (c-di-AMP), which inhibits the potassium transport activity. Functionally, high-affinity potassium transporter. Functions as a K(+)/H(+) symporter. The protein is Potassium transporter KimA of Bacillus subtilis (strain 168).